The sequence spans 493 residues: 2-amino-4-deoxychorismate synthase (493 aa).

The protein belongs to the anthranilate synthase component I family. The cofactor is Mg(2+).

It catalyses the reaction (2S)-2-amino-4-deoxychorismate + L-glutamate = chorismate + L-glutamine. In terms of biological role, converts chorismate to 2-amino-4-deoxychorismate (ADIC). Involved in the biosynthesis of the benzoxazolinate moiety of the enediyne antitumor antibiotic C-1027. The chain is 2-amino-4-deoxychorismate synthase (sgcD) from Streptomyces globisporus.